A 319-amino-acid chain; its full sequence is Lambda-crystallin (319 aa).

N-acetylalanine is present on A2. S3 carries the post-translational modification Phosphoserine. NAD(+) contacts are provided by residues 16–17, D36, E97, and K102; that span reads LV. S111 carries the post-translational modification Phosphoserine.

This sequence belongs to the 3-hydroxyacyl-CoA dehydrogenase family. Homodimer. Detected in eye lens, kidney, liver, heart, lung, brain and testis.

It localises to the cytoplasm. The catalysed reaction is L-gulonate + NAD(+) = 3-dehydro-L-gulonate + NADH + H(+). Its activity is regulated as follows. Inhibited by malonate and by inorganic phosphate. Functionally, functions as a crystallin in the rabbit eye lens. Has high L-gulonate 3-dehydrogenase activity. It also exhibits low dehydrogenase activity toward L-3-hydroxybutyrate (HBA) and L-threonate. This chain is Lambda-crystallin (CRYL1), found in Oryctolagus cuniculus (Rabbit).